Reading from the N-terminus, the 89-residue chain is UPF0335 protein CCNA_03428 (89 aa).

This sequence belongs to the UPF0335 family.

This is UPF0335 protein CCNA_03428 from Caulobacter vibrioides (strain NA1000 / CB15N) (Caulobacter crescentus).